A 400-amino-acid polypeptide reads, in one-letter code: Involucrin (400 aa).

3 disordered regions span residues 1 to 196, 273 to 312, and 333 to 381; these read MSQQ…HLKQ, KEEV…EQQL, and KRDE…KGEV. Composition is skewed to low complexity over residues 78–159, 169–186, and 279–292; these read QQQQ…QQHQ, EQQQ…GQQE, and EQQQ…QQHQ. Residues 333 to 344 are compositionally biased toward basic and acidic residues; that stretch reads KRDEQLGKKEEQ. Low complexity predominate over residues 346–358; sequence LEPSEQQEGLLEQ.

It belongs to the involucrin family. Directly or indirectly cross-linked to cornifelin (CNFN). Post-translationally, substrate of transglutaminase. Specific glutamines or lysines are cross-linked to keratins, desmoplakin and to inter involucrin molecules. Keratinocytes of epidermis and other stratified squamous epithelia.

It is found in the cytoplasm. Functionally, part of the insoluble cornified cell envelope (CE) of stratified squamous epithelia. This Tupaia glis (Common tree shrew) protein is Involucrin (IVL).